Reading from the N-terminus, the 425-residue chain is MPHTGQAGVNQLGGVFVNGRPLPDCVRRRIVDLALCGVRPCDISRQLLVSHGCVSKILTRFYETGSIRPGSIGGSKTKQVATPTVVKKIIRLKEENSGMFAWEIREQLQQQRVCDPSSVPSISSINRILRNSGLWTDEMTSSQQNAAAAAAAAAAAAHQAGSGPSNGYGGQAPPPPVTVAPPTPAATPSIARYAKPPALMMNSAGEMPIKPAPKMPPSMGHGHSHGLNPNVSGLDLSYSALHKHWLWNPSLLYYTQAHIQAQAAASGGQFLPYAGGYLPHAMAAAAASSTSALGGFTKSESSIDLSTPGAAGDALSDCDSGKSSPAALSLTASGGGNGAGSAPEASPGSTLSHSRKRNPYSIEELLKKPEKRLRLDSNRLECLESSSCESSQDSPVAPPLETPEDEDPAEAEEEQEEEDSVEVVN.

Positions 5 to 132 (GQAGVNQLGG…SSINRILRNS (128 aa)) form a DNA-binding region, paired. The segment at 8 to 64 (GVNQLGGVFVNGRPLPDCVRRRIVDLALCGVRPCDISRQLLVSHGCVSKILTRFYET) is PAI subdomain. The segment at 84–132 (TVVKKIIRLKEENSGMFAWEIREQLQQQRVCDPSSVPSISSINRILRNS) is RED subdomain. Disordered regions lie at residues 159–188 (QAGS…AATP), 297–358 (TKSE…RKRN), and 383–425 (LESS…EVVN). Residues 172 to 185 (APPPPVTVAPPTPA) are compositionally biased toward pro residues. Low complexity-rich tracts occupy residues 323-332 (SSPAALSLTA) and 340-349 (GSAPEASPGS). The segment covering 402 to 425 (TPEDEDPAEAEEEQEEEDSVEVVN) has biased composition (acidic residues).

Central and peripheral nervous systems.

The protein resides in the nucleus. Functionally, transcriptional regulator that specifies poly-innervated organs (chemosensory bristle). Also controls the number of neurons. The protein is Paired box pox-neuro protein (Poxn) of Drosophila melanogaster (Fruit fly).